Consider the following 290-residue polypeptide: 4-hydroxy-tetrahydrodipicolinate synthase (290 aa).

A pyruvate-binding site is contributed by T45. Y133 functions as the Proton donor/acceptor in the catalytic mechanism. The active-site Schiff-base intermediate with substrate is K161. I202 provides a ligand contact to pyruvate.

The protein belongs to the DapA family. In terms of assembly, homotetramer; dimer of dimers.

It is found in the cytoplasm. It catalyses the reaction L-aspartate 4-semialdehyde + pyruvate = (2S,4S)-4-hydroxy-2,3,4,5-tetrahydrodipicolinate + H2O + H(+). Its pathway is amino-acid biosynthesis; L-lysine biosynthesis via DAP pathway; (S)-tetrahydrodipicolinate from L-aspartate: step 3/4. Its function is as follows. Catalyzes the condensation of (S)-aspartate-beta-semialdehyde [(S)-ASA] and pyruvate to 4-hydroxy-tetrahydrodipicolinate (HTPA). The polypeptide is 4-hydroxy-tetrahydrodipicolinate synthase (Alkalilimnicola ehrlichii (strain ATCC BAA-1101 / DSM 17681 / MLHE-1)).